The chain runs to 133 residues: MQLFVRAQELHTLEVTGRETVAQIKAHVASLEGIAPEDQVVLLAGTPLEDEATLGQCGVEALSTLEVAGRMLGGKVHGSLARVGKVRGQTLKVAKQEKKKKRTGRAKRRMQYNRRFVNVVPTFGKKKGPNANS.

In terms of domain architecture, Ubiquitin-like spans 1–74 (MQLFVRAQEL…LEVAGRMLGG (74 aa)). An N6-succinyllysine modification is found at K125.

It in the N-terminal section; belongs to the ubiquitin family. This sequence in the C-terminal section; belongs to the eukaryotic ribosomal protein eS30 family. As to quaternary structure, component of the 40S subunit of the ribosome. Post-translationally, FUBI is cleaved from ribosomal protein S30 by the deubiquitinase USP36 before the assembly of ribosomal protein S30 into pre-40S ribosomal particles. FUBI removal from ribosomal protein S30 is a crucial event for the final maturation of pre-40S particles.

The protein localises to the cytoplasm. It localises to the nucleus. Functionally, may have pro-apoptotic activity. In terms of biological role, component of the 40S subunit of the ribosome. Contributes to the assembly and function of 40S ribosomal subunits. The sequence is that of Ubiquitin-like FUBI-ribosomal protein eS30 fusion protein (FAU) from Oryctolagus cuniculus (Rabbit).